A 149-amino-acid chain; its full sequence is D-aminoacyl-tRNA deacylase (149 aa).

A Gly-cisPro motif, important for rejection of L-amino acids motif is present at residues 137–138 (GP).

Belongs to the DTD family. As to quaternary structure, homodimer.

The protein resides in the cytoplasm. It carries out the reaction glycyl-tRNA(Ala) + H2O = tRNA(Ala) + glycine + H(+). The enzyme catalyses a D-aminoacyl-tRNA + H2O = a tRNA + a D-alpha-amino acid + H(+). An aminoacyl-tRNA editing enzyme that deacylates mischarged D-aminoacyl-tRNAs. Also deacylates mischarged glycyl-tRNA(Ala), protecting cells against glycine mischarging by AlaRS. Acts via tRNA-based rather than protein-based catalysis; rejects L-amino acids rather than detecting D-amino acids in the active site. By recycling D-aminoacyl-tRNA to D-amino acids and free tRNA molecules, this enzyme counteracts the toxicity associated with the formation of D-aminoacyl-tRNA entities in vivo and helps enforce protein L-homochirality. The sequence is that of D-aminoacyl-tRNA deacylase from Caldicellulosiruptor bescii (strain ATCC BAA-1888 / DSM 6725 / KCTC 15123 / Z-1320) (Anaerocellum thermophilum).